The following is a 170-amino-acid chain: RNA pyrophosphohydrolase (170 aa).

In terms of domain architecture, Nudix hydrolase spans 9 to 162 (PYRPCAGIMV…KRAVYEKVVA (154 aa)). Positions 50 to 71 (GGIDDGERPLTAAIRELYEETG) match the Nudix box motif.

This sequence belongs to the Nudix hydrolase family. RppH subfamily. A divalent metal cation is required as a cofactor.

Functionally, accelerates the degradation of transcripts by removing pyrophosphate from the 5'-end of triphosphorylated RNA, leading to a more labile monophosphorylated state that can stimulate subsequent ribonuclease cleavage. The protein is RNA pyrophosphohydrolase of Agrobacterium fabrum (strain C58 / ATCC 33970) (Agrobacterium tumefaciens (strain C58)).